A 718-amino-acid polypeptide reads, in one-letter code: Cyclomaltodextrin glucanotransferase (718 aa).

Residues 1–34 (MFQMAKRVLLSTTLTFSLLAGSALPFLPASAIYA) form the signal peptide. Residues 35 to 172 (DADTAVTNKQ…GIKIIIDFAP (138 aa)) form an A1 region. Residues Asp-61, Asn-63, Asn-66, and Asn-67 each contribute to the Ca(2+) site. Residues Cys-77 and Cys-84 are joined by a disulfide bond. Ca(2+) is bound by residues Gly-85 and Asp-87. Residue 134–135 (YW) participates in substrate binding. Residue Asn-173 participates in Ca(2+) binding. A b region spans residues 173-236 (NHTSPAMETD…NLYDLADLNH (64 aa)). A substrate-binding site is contributed by His-174. Ile-224 serves as a coordination point for Ca(2+). A substrate-binding site is contributed by 227–230 (NLYD). Asp-233 is a Ca(2+) binding site. An A2 region spans residues 237 to 440 (NNSTIDTYFK…LRKSNPAIAY (204 aa)). Arg-261 serves as a coordination point for substrate. The active-site Nucleophile is the Asp-263. 266-267 (KH) contributes to the substrate binding site. His-267 provides a ligand contact to Ca(2+). Glu-291 functions as the Proton donor in the catalytic mechanism. Residues His-361, Asp-405, and Arg-409 each coordinate substrate. Positions 441–528 (GSTQQRWINN…ATAVWQYTAS (88 aa)) are c. The segment at 529–614 (ETTPTIGHVG…SNAYNDFTIL (86 aa)) is d. Residues 532-612 (PTIGHVGPVM…VNSNAYNDFT (81 aa)) form the IPT/TIG domain. Residues 613-718 (ILSGDQVSVR…GTATVTINWQ (106 aa)) form the CBM20 domain. Residues 615-718 (SGDQVSVRFV…GTATVTINWQ (104 aa)) are e.

It belongs to the glycosyl hydrolase 13 family. In terms of assembly, monomer. Ca(2+) serves as cofactor.

It is found in the secreted. It catalyses the reaction Cyclizes part of a (1-&gt;4)-alpha-D-glucan chain by formation of a (1-&gt;4)-alpha-D-glucosidic bond.. The chain is Cyclomaltodextrin glucanotransferase (cgtA) from Bacillus licheniformis.